Reading from the N-terminus, the 614-residue chain is Dihydroxy-acid dehydratase (614 aa).

Asp81 contributes to the Mg(2+) binding site. Position 122 (Cys122) interacts with [2Fe-2S] cluster. Mg(2+)-binding residues include Asp123 and Lys124. Lys124 bears the N6-carboxylysine mark. Residue Cys195 coordinates [2Fe-2S] cluster. Position 491 (Glu491) interacts with Mg(2+). Residue Ser517 is the Proton acceptor of the active site.

Belongs to the IlvD/Edd family. Homodimer. It depends on [2Fe-2S] cluster as a cofactor. Mg(2+) serves as cofactor.

It catalyses the reaction (2R)-2,3-dihydroxy-3-methylbutanoate = 3-methyl-2-oxobutanoate + H2O. It carries out the reaction (2R,3R)-2,3-dihydroxy-3-methylpentanoate = (S)-3-methyl-2-oxopentanoate + H2O. It functions in the pathway amino-acid biosynthesis; L-isoleucine biosynthesis; L-isoleucine from 2-oxobutanoate: step 3/4. Its pathway is amino-acid biosynthesis; L-valine biosynthesis; L-valine from pyruvate: step 3/4. Functions in the biosynthesis of branched-chain amino acids. Catalyzes the dehydration of (2R,3R)-2,3-dihydroxy-3-methylpentanoate (2,3-dihydroxy-3-methylvalerate) into 2-oxo-3-methylpentanoate (2-oxo-3-methylvalerate) and of (2R)-2,3-dihydroxy-3-methylbutanoate (2,3-dihydroxyisovalerate) into 2-oxo-3-methylbutanoate (2-oxoisovalerate), the penultimate precursor to L-isoleucine and L-valine, respectively. This Nitrobacter winogradskyi (strain ATCC 25391 / DSM 10237 / CIP 104748 / NCIMB 11846 / Nb-255) protein is Dihydroxy-acid dehydratase.